Consider the following 98-residue polypeptide: MAVSNNNNNNNSKERTQNIKEVEEKLGENPKITLKGGGKTKIMDFEQLRKPHCVRPSARFPVEDTAGGLLRTGGHRPQISDEEVSKRHHEQSHGQEDH.

The interval 58–98 (ARFPVEDTAGGLLRTGGHRPQISDEEVSKRHHEQSHGQEDH) is disordered.

This is an uncharacterized protein from Saccharomyces cerevisiae (strain ATCC 204508 / S288c) (Baker's yeast).